An 808-amino-acid polypeptide reads, in one-letter code: MDLDPNLVINHDDTNLSEISYTMEQDSSSYSLEMGGTPSSAGHRKVDMWQNHNFDSGFQTMNHSEAPSIISSLHPSSHLSGMSSMAEYEPIPNLSEQQKQKFDGITKNPTDGQYNTVRAIPELTMLMKDQDNEVVQKAVMIMQNIAKMECDAMRRQNETKIVDPCVIFTLRNLLRDKVDHPNIIRFTLGTLFNICNRQEGIDLVTRAISEQPDIIPNLIRHIGTFANSIYKYAILTMHSILSDKQRGGQSVTIARQQDAIIHVTPWLEAEKSEKLLPVIVDLIRVLCEKNTDQKVKFVKMGGPQKLLHILQQRGYENLLWRSTQLLKTFSNFDAPCLVAFGGRQILAGMLSHGSPRLVLSTLETLRNISDVPSKMKEELLLKSLLELVNSRNAVIRLYSAQTMSNLVANNRPNKEYMCSNNGVVNLCRALAIATKDWQNFQDKEAQQMEDYAESLICTLRHLCVGHPLAEKVQAYVFREPSIFLHKLMTMRPVLLKHTLNLLLKVVSQNALLAPFLLCRIGEIGFVEQLIHILRVACTQLNVQDVIEGVRVKDIVHLCIQILRLITRNPDILNEVDFFLRSPENSRMGDGHTLPIFVLQKANVEENTKSSTLELIYNLMHHEKMADHLERDEILCKMLHSVQMQAANHPELANLAANILKLMSEKRERNRIHYGRHGSFESQFGHLSVAAQRTEVLNSHGETYEGAGEQWSQPMSDDSMMESYCNSSGRDSSKTYNSPMYHSPPSMYPEYPNGPPSGPYYDPHAFTSTRPTPPHYANYDSPPVYNNIPSNQGPSSHLSDQYPYRQGRF.

The interval 1 to 85 is involved in transcriptional activation; it reads MDLDPNLVIN…SSHLSGMSSM (85 aa). ARM repeat units follow at residues 118 to 160, 165 to 209, and 369 to 408; these read RAIP…NETK, CVIF…RAIS, and SDVP…NLVA. Positions 541–808 are involved in transcriptional activation; the sequence is NVQDVIEGVR…DQYPYRQGRF (268 aa). The segment at 702–808 is disordered; the sequence is TYEGAGEQWS…DQYPYRQGRF (107 aa). The span at 723–736 shows a compositional bias: polar residues; that stretch reads YCNSSGRDSSKTYN. The span at 737–750 shows a compositional bias: low complexity; that stretch reads SPMYHSPPSMYPEY. The span at 786–798 shows a compositional bias: polar residues; it reads NIPSNQGPSSHLS.

Belongs to the beta-catenin family. In terms of assembly, interacts with apr-1, axl-1, daf-16, lin-23, and pop-1 (via acidic region in N-terminus 1-44). Interacts (via ARM repeats) with pry-1.

The protein resides in the cytoplasm. The protein localises to the nucleus. Its subcellular location is the membrane. It localises to the cell junction. Participates in the Wnt signaling pathway which affects cell fate and may regulate the stem cell divisions of seam cells during larval development. Functions as a transcriptional activator but is dependent on the interaction with pop-1. Involved in maintaining lin-39 Hox expression and regulating glr-1 abundance at the synapses. Required for mab-5 expression during Q neuroblast migration and for oxidative stress-induced daf-16 signaling. Has roles in egg laying, vulva precursor cell fate determination, Q neuroblast migration, posterior ectodermal cell P12 specification, movement, body length, male tail development and dauer induction. Functionally redundant to wrm-1 and hmp-2. This is Beta-catenin/armadillo-related protein 1 (bar-1) from Caenorhabditis briggsae.